The primary structure comprises 405 residues: Solute carrier family 35 member E2B (405 aa).

A disordered region spans residues 1–28 (MSSSVKTPALEELVPGSEEKPKGRSPLS). Helical transmembrane passes span 81 to 101 (LWFF…SLLG), 106 to 126 (MLGA…TLVP), 142 to 162 (FLMT…LGLV), 167 to 187 (VAVS…VIMS), 195 to 215 (TGLL…LCTA), 219 to 241 (SFNV…QNVF), 264 to 284 (AAAV…PVIG), 296 to 316 (VVLL…TAYA), 326 to 346 (FSVA…IVFG), and 347 to 367 (NKIT…VLLY). Residues 380-405 (SLAAATGRAPDDTVEPLLPQDPRQHP) form a disordered region.

This sequence belongs to the TPT transporter family. SLC35E subfamily.

It localises to the membrane. In terms of biological role, putative transporter. The protein is Solute carrier family 35 member E2B (SLC35E2B) of Homo sapiens (Human).